The chain runs to 110 residues: Protein P2 (110 aa).

The span at 72 to 82 shows a compositional bias: polar residues; sequence KLPTTSGSSSA. Residues 72 to 110 are disordered; the sequence is KLPTTSGSSSAGAIVPAGSNTQGQYKAPPKKGIKRKYPA. A compositionally biased stretch (basic residues) spans 99–110; sequence PPKKGIKRKYPA.

This is Protein P2 from Oryza sativa (Rice).